The sequence spans 524 residues: Lysine--tRNA ligase (524 aa).

The short motif at 39–47 (ASGIPHMGS) is the 'HIGH' region element. The 'KMSKS' region signature appears at 294 to 298 (KISKS). An ATP-binding site is contributed by Lys297.

The protein belongs to the class-I aminoacyl-tRNA synthetase family.

The protein resides in the cytoplasm. The enzyme catalyses tRNA(Lys) + L-lysine + ATP = L-lysyl-tRNA(Lys) + AMP + diphosphate. This chain is Lysine--tRNA ligase (lysS), found in Cenarchaeum symbiosum.